The primary structure comprises 409 residues: 2,3-bisphosphoglycerate-independent phosphoglycerate mutase (409 aa).

The disordered stretch occupies residues 160–179 (ITDADPKHEGNKPKTVKPLD).

The protein belongs to the BPG-independent phosphoglycerate mutase family. A-PGAM subfamily.

The catalysed reaction is (2R)-2-phosphoglycerate = (2R)-3-phosphoglycerate. It functions in the pathway carbohydrate degradation; glycolysis; pyruvate from D-glyceraldehyde 3-phosphate: step 3/5. Functionally, catalyzes the interconversion of 2-phosphoglycerate and 3-phosphoglycerate. This is 2,3-bisphosphoglycerate-independent phosphoglycerate mutase from Methanosphaera stadtmanae (strain ATCC 43021 / DSM 3091 / JCM 11832 / MCB-3).